Here is a 215-residue protein sequence, read N- to C-terminus: Ribosomal RNA small subunit methyltransferase G (215 aa).

Residues G78, L83, 128-129 (AE), and R146 each bind S-adenosyl-L-methionine.

This sequence belongs to the methyltransferase superfamily. RNA methyltransferase RsmG family.

The protein resides in the cytoplasm. It catalyses the reaction guanosine(527) in 16S rRNA + S-adenosyl-L-methionine = N(7)-methylguanosine(527) in 16S rRNA + S-adenosyl-L-homocysteine. In terms of biological role, specifically methylates the N7 position of guanine in position 527 of 16S rRNA. The protein is Ribosomal RNA small subunit methyltransferase G of Anaeromyxobacter dehalogenans (strain 2CP-1 / ATCC BAA-258).